A 561-amino-acid chain; its full sequence is DNA mismatch repair protein MutL (561 aa).

This sequence belongs to the DNA mismatch repair MutL/HexB family.

Functionally, this protein is involved in the repair of mismatches in DNA. It is required for dam-dependent methyl-directed DNA mismatch repair. May act as a 'molecular matchmaker', a protein that promotes the formation of a stable complex between two or more DNA-binding proteins in an ATP-dependent manner without itself being part of a final effector complex. The chain is DNA mismatch repair protein MutL from Rippkaea orientalis (strain PCC 8801 / RF-1) (Cyanothece sp. (strain PCC 8801)).